The primary structure comprises 366 residues: UDP-N-acetylglucosamine--N-acetylmuramyl-(pentapeptide) pyrophosphoryl-undecaprenol N-acetylglucosamine transferase (366 aa).

UDP-N-acetyl-alpha-D-glucosamine is bound by residues 22 to 24 (TGG), N134, R170, S198, I253, and Q298.

Belongs to the glycosyltransferase 28 family. MurG subfamily.

Its subcellular location is the cell inner membrane. The catalysed reaction is di-trans,octa-cis-undecaprenyl diphospho-N-acetyl-alpha-D-muramoyl-L-alanyl-D-glutamyl-meso-2,6-diaminopimeloyl-D-alanyl-D-alanine + UDP-N-acetyl-alpha-D-glucosamine = di-trans,octa-cis-undecaprenyl diphospho-[N-acetyl-alpha-D-glucosaminyl-(1-&gt;4)]-N-acetyl-alpha-D-muramoyl-L-alanyl-D-glutamyl-meso-2,6-diaminopimeloyl-D-alanyl-D-alanine + UDP + H(+). It functions in the pathway cell wall biogenesis; peptidoglycan biosynthesis. Functionally, cell wall formation. Catalyzes the transfer of a GlcNAc subunit on undecaprenyl-pyrophosphoryl-MurNAc-pentapeptide (lipid intermediate I) to form undecaprenyl-pyrophosphoryl-MurNAc-(pentapeptide)GlcNAc (lipid intermediate II). The chain is UDP-N-acetylglucosamine--N-acetylmuramyl-(pentapeptide) pyrophosphoryl-undecaprenol N-acetylglucosamine transferase from Xylella fastidiosa (strain M12).